Reading from the N-terminus, the 257-residue chain is Acyl-[acyl-carrier-protein]--UDP-N-acetylglucosamine O-acyltransferase (257 aa).

Belongs to the transferase hexapeptide repeat family. LpxA subfamily. As to quaternary structure, homotrimer.

The protein localises to the cytoplasm. It catalyses the reaction a (3R)-hydroxyacyl-[ACP] + UDP-N-acetyl-alpha-D-glucosamine = a UDP-3-O-[(3R)-3-hydroxyacyl]-N-acetyl-alpha-D-glucosamine + holo-[ACP]. Its pathway is glycolipid biosynthesis; lipid IV(A) biosynthesis; lipid IV(A) from (3R)-3-hydroxytetradecanoyl-[acyl-carrier-protein] and UDP-N-acetyl-alpha-D-glucosamine: step 1/6. In terms of biological role, involved in the biosynthesis of lipid A, a phosphorylated glycolipid that anchors the lipopolysaccharide to the outer membrane of the cell. This chain is Acyl-[acyl-carrier-protein]--UDP-N-acetylglucosamine O-acyltransferase, found in Anaeromyxobacter sp. (strain K).